A 427-amino-acid polypeptide reads, in one-letter code: Adenylosuccinate synthetase (427 aa).

Residues 12-18 (GDEGKGK) and 40-42 (GHT) each bind GTP. Asp-13 acts as the Proton acceptor in catalysis. Mg(2+) contacts are provided by Asp-13 and Gly-40. IMP contacts are provided by residues 13-16 (DEGK), 38-41 (NAGH), Thr-130, Arg-144, Gln-224, Thr-239, and Arg-303. Catalysis depends on His-41, which acts as the Proton donor. Position 299–305 (299–305 (SVTGRPR)) interacts with substrate. Residues Arg-305, 331–333 (KLD), and 411–413 (SVG) contribute to the GTP site.

Belongs to the adenylosuccinate synthetase family. Homodimer. Mg(2+) is required as a cofactor.

Its subcellular location is the cytoplasm. The enzyme catalyses IMP + L-aspartate + GTP = N(6)-(1,2-dicarboxyethyl)-AMP + GDP + phosphate + 2 H(+). It functions in the pathway purine metabolism; AMP biosynthesis via de novo pathway; AMP from IMP: step 1/2. Plays an important role in the de novo pathway of purine nucleotide biosynthesis. Catalyzes the first committed step in the biosynthesis of AMP from IMP. In Sorangium cellulosum (strain So ce56) (Polyangium cellulosum (strain So ce56)), this protein is Adenylosuccinate synthetase.